The primary structure comprises 772 residues: Semaphorin-3A (772 aa).

The N-terminal stretch at 1–20 (MGWFTGIACLFWGVLLTARA) is a signal peptide. One can recognise a Sema domain in the interval 31 to 514 (RLKLSYKEML…STAGVAQLPL (484 aa)). N-linked (GlcNAc...) asparagine glycosylation occurs at Asn-53. Cys-103 and Cys-114 are joined by a disulfide. N-linked (GlcNAc...) asparagine glycosylation occurs at Asn-125. Disulfide bonds link Cys-132-Cys-141, Cys-269-Cys-381, Cys-293-Cys-341, and Cys-517-Cys-535. In terms of domain architecture, Ig-like C2-type spans 579-665 (PSLEERIIYG…GFMQTLLKVT (87 aa)). N-linked (GlcNAc...) asparagine glycosylation occurs at Asn-591. A disulfide bridge links Cys-650 with Cys-723. Residues 729–738 (RDRKQRRQRP) show a composition bias toward basic residues. The tract at residues 729–772 (RDRKQRRQRPGHSQGSSNKWKHMQESKKGRNRRTHEFERAPRSV) is disordered. The segment covering 750–772 (HMQESKKGRNRRTHEFERAPRSV) has biased composition (basic and acidic residues).

The protein belongs to the semaphorin family. In terms of assembly, interacts with PXND1.

It localises to the secreted. Its function is as follows. Plays a role in growth cones guidance. May function to pattern sensory projections by selectively repelling axons that normally terminate dorsally. Involved in the development of the olfactory system and in neuronal control of puberty. The polypeptide is Semaphorin-3A (Sema3a) (Mus musculus (Mouse)).